The following is a 325-amino-acid chain: MRAPDFWRKDNAVSRLLAPLGAIYGWAVRRNLERAEEYRPAVPVICVGNIVVGGAGKTPVGIALARRLIAAGVKPHFLTRGYGGTEVGPRAVDLDRHDFARVGDEALLLAREAPTWVSRWRPDGAVAATEMGAEVIIMDDGFQNGSIAKDLSLVVVDGSYGFGNGRTMPAGPCREPPDQGLARADAMVVIGKDRRGLAELARAHGIPLLAARLVPGPEGADLKGRKVVAFAGIGRPEKFFASLKQCGARLTADHSFPDHHPFTRADIEALLAEAEANEALLITTAKDRVRLPADLRARVAVLSVSLDWDAPSLLTPLFDRIGVRA.

Residue 51-58 (VVGGAGKT) participates in ATP binding.

Belongs to the LpxK family.

It carries out the reaction a lipid A disaccharide + ATP = a lipid IVA + ADP + H(+). It functions in the pathway glycolipid biosynthesis; lipid IV(A) biosynthesis; lipid IV(A) from (3R)-3-hydroxytetradecanoyl-[acyl-carrier-protein] and UDP-N-acetyl-alpha-D-glucosamine: step 6/6. Its function is as follows. Transfers the gamma-phosphate of ATP to the 4'-position of a tetraacyldisaccharide 1-phosphate intermediate (termed DS-1-P) to form tetraacyldisaccharide 1,4'-bis-phosphate (lipid IVA). The polypeptide is Tetraacyldisaccharide 4'-kinase (Paramagnetospirillum magneticum (strain ATCC 700264 / AMB-1) (Magnetospirillum magneticum)).